The chain runs to 58 residues: PDPCCAEGTCECEEGKCKAGCKCTSCRCSPCEKCTSECECKSKEECAKNCTKPCSCCP.

The segment at Pro1–Ser29 is beta. Residues Cys4, Cys5, Cys10, Cys12, Cys17, Cys21, Cys23, Cys26, Cys28, Cys31, Cys34, Cys38, Cys40, Cys46, Cys50, Cys54, Cys56, and Cys57 each contribute to the a divalent metal cation site. Residues Pro30–Pro58 are alpha.

Its function is as follows. Metallothioneins have a high content of cysteine residues that bind various heavy metals. Class I MTS in crustacea are involved in the sequestration of elevated levels of heavy-metal ions. This chain is Metallothionein, found in Potamon potamios.